The following is a 696-amino-acid chain: Rho-related BTB domain-containing protein 1 (696 aa).

Residues 1-210 (MDADMDYERP…DNAIRAALIS (210 aa)) form a rho-like region. Residues 21-28 (GDNAVGKT), 84-88 (DTFGD), and 140-143 (CQLD) contribute to the GTP site. 2 BTB domains span residues 266–427 (ADVL…DEKE) and 485–552 (SDVT…SPNL). Residues 327 to 348 (VDPEEEREEGPPRIPQADQWKS) form a disordered region.

The protein belongs to the small GTPase superfamily. Rho family. In terms of tissue distribution, ubiquitous, with highest levels in skeletal muscle, placenta, testis, stomach, and kidney, followed by uterus and adrenal gland. Expressed in a variety of fetal tissues.

The polypeptide is Rho-related BTB domain-containing protein 1 (RHOBTB1) (Homo sapiens (Human)).